The chain runs to 345 residues: S-adenosylmethionine:tRNA ribosyltransferase-isomerase (345 aa).

Belongs to the QueA family. As to quaternary structure, monomer.

Its subcellular location is the cytoplasm. The catalysed reaction is 7-aminomethyl-7-carbaguanosine(34) in tRNA + S-adenosyl-L-methionine = epoxyqueuosine(34) in tRNA + adenine + L-methionine + 2 H(+). It functions in the pathway tRNA modification; tRNA-queuosine biosynthesis. Its function is as follows. Transfers and isomerizes the ribose moiety from AdoMet to the 7-aminomethyl group of 7-deazaguanine (preQ1-tRNA) to give epoxyqueuosine (oQ-tRNA). The protein is S-adenosylmethionine:tRNA ribosyltransferase-isomerase of Helicobacter pylori (strain ATCC 700392 / 26695) (Campylobacter pylori).